The primary structure comprises 65 residues: Large ribosomal subunit protein uL30 (65 aa).

It belongs to the universal ribosomal protein uL30 family. In terms of assembly, part of the 50S ribosomal subunit.

In Aster yellows witches'-broom phytoplasma (strain AYWB), this protein is Large ribosomal subunit protein uL30.